The primary structure comprises 52 residues: UPF0181 protein HI_1434.2 (52 aa).

Belongs to the UPF0181 family.

The sequence is that of UPF0181 protein HI_1434.2 from Haemophilus influenzae (strain ATCC 51907 / DSM 11121 / KW20 / Rd).